A 240-amino-acid polypeptide reads, in one-letter code: L-isoleucine-4-hydroxylase (240 aa).

3 residues coordinate Fe cation: histidine 159, aspartate 161, and histidine 212.

It belongs to the iron/ascorbate-dependent oxidoreductase family. It depends on L-ascorbate as a cofactor. Requires Fe(2+) as cofactor.

The catalysed reaction is L-isoleucine + 2-oxoglutarate + O2 = (4S)-4-hydroxy-L-isoleucine + succinate + CO2. In terms of biological role, catalyzes the hydroxylation of L-isoleucine to produce (4S)-4-hydroxy-L-isoleucine. Can also catalyze the hydroxylation of L-leucine, L-norvaline, L-norleucine and L-allo-isoleucine, as well as the sulfoxidation of L-methionine, L-ethionine, S-methyl-L-cysteine, S-ethyl-L-cysteine, and S-allyl-L-cysteine. The protein is L-isoleucine-4-hydroxylase of Bacillus thuringiensis.